The following is a 90-amino-acid chain: Probable Fe(2+)-trafficking protein (90 aa).

It belongs to the Fe(2+)-trafficking protein family.

In terms of biological role, could be a mediator in iron transactions between iron acquisition and iron-requiring processes, such as synthesis and/or repair of Fe-S clusters in biosynthetic enzymes. The protein is Probable Fe(2+)-trafficking protein of Cupriavidus necator (strain ATCC 17699 / DSM 428 / KCTC 22496 / NCIMB 10442 / H16 / Stanier 337) (Ralstonia eutropha).